A 120-amino-acid polypeptide reads, in one-letter code: NAD(P)H-quinone oxidoreductase subunit 3, chloroplastic (120 aa).

3 helical membrane-spanning segments follow: residues 9 to 29 (IFWA…LISG), 64 to 84 (MFAL…PWAM), and 88 to 108 (VLGV…IVGS).

The protein belongs to the complex I subunit 3 family. NDH is composed of at least 16 different subunits, 5 of which are encoded in the nucleus.

The protein localises to the plastid. It is found in the chloroplast thylakoid membrane. It carries out the reaction a plastoquinone + NADH + (n+1) H(+)(in) = a plastoquinol + NAD(+) + n H(+)(out). The catalysed reaction is a plastoquinone + NADPH + (n+1) H(+)(in) = a plastoquinol + NADP(+) + n H(+)(out). In terms of biological role, NDH shuttles electrons from NAD(P)H:plastoquinone, via FMN and iron-sulfur (Fe-S) centers, to quinones in the photosynthetic chain and possibly in a chloroplast respiratory chain. The immediate electron acceptor for the enzyme in this species is believed to be plastoquinone. Couples the redox reaction to proton translocation, and thus conserves the redox energy in a proton gradient. This chain is NAD(P)H-quinone oxidoreductase subunit 3, chloroplastic, found in Gossypium barbadense (Sea Island cotton).